The following is a 375-amino-acid chain: Growth/differentiation factor 8 (375 aa).

An N-terminal signal peptide occupies residues 1–18; the sequence is MQRLQICVYIYLFVLIVA. The propeptide occupies 19–266; that stretch reads GPVDLSENSE…VTDTPKRSRR (248 aa). Asn71 carries an N-linked (GlcNAc...) asparagine glycan. 4 cysteine pairs are disulfide-bonded: Cys272–Cys282, Cys281–Cys340, Cys309–Cys372, and Cys313–Cys374.

It belongs to the TGF-beta family. As to quaternary structure, homodimer; disulfide-linked. Interacts with WFIKKN2, leading to inhibit its activity. Interacts with FSTL3. In terms of processing, synthesized as large precursor molecule that undergoes proteolytic cleavage to generate an N-terminal propeptide and a disulfide linked C-terminal dimer, which is the biologically active molecule. The circulating form consists of a latent complex of the C-terminal dimer and other proteins, including its propeptide, which maintain the C-terminal dimer in a latent, inactive state. Ligand activation requires additional cleavage of the prodomain by a tolloid-like metalloproteinase.

It localises to the secreted. Its function is as follows. Acts specifically as a negative regulator of skeletal muscle growth. This Canis lupus familiaris (Dog) protein is Growth/differentiation factor 8 (MSTN).